A 673-amino-acid polypeptide reads, in one-letter code: uncharacterized protein (673 aa).

A signal peptide spans 1–24 (MKIHNIIKIIIVVCLEGFALTSFA). Transmembrane regions (helical) follow at residues 224–244 (NAIG…MVLN), 253–273 (IALF…LGPL), 410–430 (IILI…LYFI), 436–456 (CMIT…MMLF), 469–489 (VSLS…LLIT), and 562–582 (VVSI…FYYF). The interval 624–673 (AQATQGKPPSSGDMPGDGGSKRSEGQKGDDSFISSGGNSSGDSLSSSGGK) is disordered. Basic and acidic residues predominate over residues 642-653 (GSKRSEGQKGDD). Over residues 654–673 (SFISSGGNSSGDSLSSSGGK) the composition is skewed to low complexity.

This sequence belongs to the TrbL/VirB6 family.

The protein localises to the cell membrane. This is an uncharacterized protein from Rickettsia bellii (strain RML369-C).